Consider the following 39-residue polypeptide: SPbeta prophage-derived membrane protein YosA (39 aa).

A helical membrane pass occupies residues 19–39; that stretch reads SFVLIVVLFILLIIVGATFLY.

This sequence belongs to the SscA family.

The protein resides in the membrane. The protein is SPbeta prophage-derived membrane protein YosA (yosA) of Bacillus subtilis (strain 168).